The chain runs to 389 residues: Alanine racemase (389 aa).

Residue lysine 46 is the Proton acceptor; specific for D-alanine of the active site. The residue at position 46 (lysine 46) is an N6-(pyridoxal phosphate)lysine. Arginine 144 lines the substrate pocket. Residue tyrosine 275 is the Proton acceptor; specific for L-alanine of the active site. Methionine 323 contacts substrate.

Belongs to the alanine racemase family. The cofactor is pyridoxal 5'-phosphate.

It carries out the reaction L-alanine = D-alanine. The protein operates within amino-acid biosynthesis; D-alanine biosynthesis; D-alanine from L-alanine: step 1/1. Its function is as follows. Catalyzes the interconversion of L-alanine and D-alanine. May also act on other amino acids. This is Alanine racemase (alr) from Mycolicibacterium smegmatis (strain ATCC 700084 / mc(2)155) (Mycobacterium smegmatis).